A 291-amino-acid chain; its full sequence is MIIIEFIKGLILGIVEGLTEFAPVSSTGHMILVDDMWLKSTEFLGPHSAFTFKVVIQLGSVFAAAWVFRERYFEMLHIGKYRNSSINEEFRSKPRRLNLLHVLVGMIPAGILGVLFDDFIEAHLFSVPTVMIGLFLGAIYMIIADKYSKKVQNPKSVDQINYVQAFVIGISQAVAMWPGFSRSGSTISTGVLMKLDHKSASDFTFIMAVPIMLAASALSLVKNYQYIELAHIPFYLIGFLAAFIVGLIAIKTFLHLINKVKLVPFAIYRIVLVIIIAILYFGFGIGQGISG.

The next 8 membrane-spanning stretches (helical) occupy residues 1 to 21 (MIII…LTEF), 48 to 68 (SAFT…AWVF), 100 to 120 (LHVL…DDFI), 124 to 144 (LFSV…MIIA), 160 to 180 (INYV…WPGF), 201 to 221 (SDFT…LSLV), 230 to 250 (AHIP…LIAI), and 270 to 290 (IVLV…QGIS).

Belongs to the UppP family.

The protein localises to the cell membrane. It carries out the reaction di-trans,octa-cis-undecaprenyl diphosphate + H2O = di-trans,octa-cis-undecaprenyl phosphate + phosphate + H(+). In terms of biological role, catalyzes the dephosphorylation of undecaprenyl diphosphate (UPP). Confers resistance to bacitracin. This Staphylococcus haemolyticus (strain JCSC1435) protein is Undecaprenyl-diphosphatase.